Reading from the N-terminus, the 333-residue chain is D-glutamate N-acetyltransferase (333 aa).

Belongs to the N-acetyltransferase DgcN family.

The catalysed reaction is D-glutamate + acetyl-CoA = N-acetyl-D-glutamate + CoA + H(+). Its pathway is amino-acid degradation. N-acetyltransferase involved in a deamination-independent D-glutamate degradation pathway, named the DgcN-DgcA pathway. Catalyzes the transfer of the acetyl moiety from acetyl-CoA to D-glutamate to generate N-acetyl-D-glutamate. The polypeptide is D-glutamate N-acetyltransferase (Tritonibacter scottomollicae (Epibacterium scottomollicae)).